The following is a 127-amino-acid chain: MLYVISELFFFLVYRYCFSNSNTNRLIKVGSRSTPLASMLRRYSCNISVACCTIFFLSELLTSFLHFNIPTSKSMRESQYTSRYFCQISNMLSIGSQLRSMKNSITVKFCVISVSLLSLPSSTLTKS.

This is an uncharacterized protein from Saccharomyces cerevisiae (strain ATCC 204508 / S288c) (Baker's yeast).